The sequence spans 355 residues: Tetraspanin-10 (355 aa).

The tract at residues 1–33 is disordered; sequence MEEGERSPLLSQETAGQKPLSVHRPPTSGCLGP. The Cytoplasmic portion of the chain corresponds to 1-78; sequence MEEGERSPLL…LSPGSSCVKY (78 aa). Residues 79 to 99 form a helical membrane-spanning segment; that stretch reads LIFLSNFPFSLLGLLALAIGL. At 100 to 120 the chain is on the extracellular side; it reads WGLAVKGSLGSDLGGPLPTDP. The helical transmembrane segment at 121–141 threads the bilayer; the sequence is MLGLALGGLVVSAASLAGCLG. Residues 142 to 154 lie on the Cytoplasmic side of the membrane; the sequence is ALCENTCLLRGFS. The helical transmembrane segment at 155 to 175 threads the bilayer; it reads GGILAFLVLEAVAGALVVALW. Residues 176–355 lie on the Extracellular side of the membrane; sequence GPLQDSLEHT…APPAAKPARG (180 aa). 4 disulfide bridges follow: C212–C279, C213–C243, C229–C237, and C244–C258. N-linked (GlcNAc...) asparagine glycosylation occurs at N228. The interval 327–355 is disordered; sequence YGPGAHGEDRAGPQSPSPGAPPAAKPARG. Pro residues predominate over residues 341–355; it reads SPSPGAPPAAKPARG.

This sequence belongs to the tetraspanin (TM4SF) family. As to quaternary structure, interacts with ADAM10. Expressed in the eye, including iris, ciliary body, retinal pigment epithelium, but not lens (protein level).

The protein localises to the cell membrane. Its function is as follows. Part of TspanC8 subgroup, composed of 6 members that interact with the transmembrane metalloprotease ADAM10. This interaction is required for ADAM10 exit from the endoplasmic reticulum and for enzymatic maturation and trafficking to the cell surface as well as substrate specificity. Different TspanC8/ADAM10 complexes have distinct substrates. This Homo sapiens (Human) protein is Tetraspanin-10.